The primary structure comprises 374 residues: MSKYYDGVEFPFCDEFSKYEKLAKIGQGTFGEVFKAKHRQTGKKVALKKVLMENEKEGFPITALREIKILQLLKHENVVNLIEICRTKGEATQFNRYKGSIYLVFDFCEHDLAGLLSNANVKFTLAEIKRVMQMLLNGLYYIHRNKILHRDMKAANVLITRDGVLKLADFGLARAFSLAKNSQGNRYTNRVVTLWYRPPELLLGERDYGPPIDLWGAGCIMAEMWTRSPIMQGNTEQHQLTLISQLCGSITPEVWPGVDKKYELYQKMELPKGQKRKVKDRLKAYVKDPYALDLIDKLLVLDPAQRIDSDDALNHDFFWSDPMPSDLKNMLSTHNTSMFEYLAPPRRRGHMPQQPANQNRNPATTSQSEFDRVF.

One can recognise a Protein kinase domain in the interval 19–318 (YEKLAKIGQG…SDDALNHDFF (300 aa)). Residues 25–33 (IGQGTFGEV) and Lys48 contribute to the ATP site. Asp151 functions as the Proton acceptor in the catalytic mechanism. Residues 345-374 (PRRRGHMPQQPANQNRNPATTSQSEFDRVF) form a disordered region. Residues 354 to 368 (QPANQNRNPATTSQS) are compositionally biased toward polar residues.

Belongs to the protein kinase superfamily. CMGC Ser/Thr protein kinase family. CDC2/CDKX subfamily. In terms of assembly, component of the super elongation complex (SEC). Associates with ccnt1/cyclin-T1, ccnt2/cyclin-T2 or ccnk/cyclin-K to form active P-TEFb.

Its subcellular location is the nucleus. It is found in the cytoplasm. The protein resides in the PML body. The enzyme catalyses L-seryl-[protein] + ATP = O-phospho-L-seryl-[protein] + ADP + H(+). It catalyses the reaction L-threonyl-[protein] + ATP = O-phospho-L-threonyl-[protein] + ADP + H(+). It carries out the reaction [DNA-directed RNA polymerase] + ATP = phospho-[DNA-directed RNA polymerase] + ADP + H(+). Protein kinase involved in the regulation of transcription. Member of the cyclin-dependent kinase pair (CDK9/cyclin-T) complex, also called positive transcription elongation factor b (P-TEFb), which facilitates the transition from abortive to productive elongation by phosphorylating the CTD (C-terminal domain) of the large subunit of RNA polymerase II (RNAP II) polr2a, supt5h and rdbp. This complex is inactive when in the 7SK snRNP complex form. Regulates cytokine inducible transcription networks by facilitating promoter recognition of target transcription factors. P-TEFb is also involved in cotranscriptional histone modification, mRNA processing and mRNA export. This Danio rerio (Zebrafish) protein is Cyclin-dependent kinase 9.